The primary structure comprises 156 residues: Myosin regulatory light chain, striated adductor muscle (156 aa).

Ala-1 bears the Blocked amino end (Ala) mark. EF-hand domains lie at 15-50 and 84-119; these read KQIQ…LGRT and DTEE…MGDN. Residues Asp-28, Asp-30, Asp-32, and Asp-39 each coordinate Ca(2+).

Its function is as follows. In molluscan muscle, calcium regulation is associated with myosin rather than with actin. Muscle myosin contains two types of light chains: the catalytic light chain, essential for ATPase activity, and the regulatory light chain, a calcium-binding protein responsible for Ca(2+) dependent binding and Ca(2+) dependent Mg-ATPase activity. This is Myosin regulatory light chain, striated adductor muscle from Mizuhopecten yessoensis (Japanese scallop).